The sequence spans 63 residues: Cytochrome c oxidase subunit 7C, mitochondrial (63 aa).

Residues 1-16 (MLGQSIRRFTTSVVRR) constitute a mitochondrion transit peptide. Topologically, residues 17 to 33 (SHYEEGPGKNLPFSVEN) are mitochondrial matrix. The residue at position 25 (lysine 25) is an N6-acetyllysine; alternate. Lysine 25 is modified (N6-succinyllysine; alternate). Residues 34 to 60 (KWRLLLMMTVYFGSGFAAPFFIVRHQL) form a helical membrane-spanning segment. Topologically, residues 61-63 (LKK) are mitochondrial intermembrane.

This sequence belongs to the cytochrome c oxidase VIIc family. In terms of assembly, component of the cytochrome c oxidase (complex IV, CIV), a multisubunit enzyme composed of 14 subunits. The complex is composed of a catalytic core of 3 subunits MT-CO1, MT-CO2 and MT-CO3, encoded in the mitochondrial DNA, and 11 supernumerary subunits COX4I, COX5A, COX5B, COX6A, COX6B, COX6C, COX7A, COX7B, COX7C, COX8 and NDUFA4, which are encoded in the nuclear genome. The complex exists as a monomer or a dimer and forms supercomplexes (SCs) in the inner mitochondrial membrane with NADH-ubiquinone oxidoreductase (complex I, CI) and ubiquinol-cytochrome c oxidoreductase (cytochrome b-c1 complex, complex III, CIII), resulting in different assemblies (supercomplex SCI(1)III(2)IV(1) and megacomplex MCI(2)III(2)IV(2)). Interacts with RAB5IF.

The protein resides in the mitochondrion inner membrane. It participates in energy metabolism; oxidative phosphorylation. Functionally, component of the cytochrome c oxidase, the last enzyme in the mitochondrial electron transport chain which drives oxidative phosphorylation. The respiratory chain contains 3 multisubunit complexes succinate dehydrogenase (complex II, CII), ubiquinol-cytochrome c oxidoreductase (cytochrome b-c1 complex, complex III, CIII) and cytochrome c oxidase (complex IV, CIV), that cooperate to transfer electrons derived from NADH and succinate to molecular oxygen, creating an electrochemical gradient over the inner membrane that drives transmembrane transport and the ATP synthase. Cytochrome c oxidase is the component of the respiratory chain that catalyzes the reduction of oxygen to water. Electrons originating from reduced cytochrome c in the intermembrane space (IMS) are transferred via the dinuclear copper A center (CU(A)) of subunit 2 and heme A of subunit 1 to the active site in subunit 1, a binuclear center (BNC) formed by heme A3 and copper B (CU(B)). The BNC reduces molecular oxygen to 2 water molecules using 4 electrons from cytochrome c in the IMS and 4 protons from the mitochondrial matrix. In Rattus norvegicus (Rat), this protein is Cytochrome c oxidase subunit 7C, mitochondrial (Cox7c).